Reading from the N-terminus, the 248-residue chain is Ubiquinone biosynthesis O-methyltransferase (248 aa).

Positions 41, 72, 93, and 136 each coordinate S-adenosyl-L-methionine.

This sequence belongs to the methyltransferase superfamily. UbiG/COQ3 family.

The enzyme catalyses a 3-demethylubiquinol + S-adenosyl-L-methionine = a ubiquinol + S-adenosyl-L-homocysteine + H(+). It carries out the reaction a 3-(all-trans-polyprenyl)benzene-1,2-diol + S-adenosyl-L-methionine = a 2-methoxy-6-(all-trans-polyprenyl)phenol + S-adenosyl-L-homocysteine + H(+). It participates in cofactor biosynthesis; ubiquinone biosynthesis. Functionally, O-methyltransferase that catalyzes the 2 O-methylation steps in the ubiquinone biosynthetic pathway. The protein is Ubiquinone biosynthesis O-methyltransferase of Sinorhizobium fredii (strain NBRC 101917 / NGR234).